Here is a 492-residue protein sequence, read N- to C-terminus: Glutamyl-tRNA(Gln) amidotransferase subunit A (492 aa).

Residues K79 and S154 each act as charge relay system in the active site. S178 functions as the Acyl-ester intermediate in the catalytic mechanism.

Belongs to the amidase family. GatA subfamily. Heterotrimer of A, B and C subunits.

It carries out the reaction L-glutamyl-tRNA(Gln) + L-glutamine + ATP + H2O = L-glutaminyl-tRNA(Gln) + L-glutamate + ADP + phosphate + H(+). In terms of biological role, allows the formation of correctly charged Gln-tRNA(Gln) through the transamidation of misacylated Glu-tRNA(Gln) in organisms which lack glutaminyl-tRNA synthetase. The reaction takes place in the presence of glutamine and ATP through an activated gamma-phospho-Glu-tRNA(Gln). The sequence is that of Glutamyl-tRNA(Gln) amidotransferase subunit A from Acinetobacter baumannii (strain AB0057).